The following is a 69-amino-acid chain: Cytochrome c oxidase subunit 8A, mitochondrial (69 aa).

The N-terminal 25 residues, 1–25, are a transit peptide targeting the mitochondrion; the sequence is MYVVTPLLLRGLTGSARRLPVPRAQ. Residues 2–19 carry the SIFI-degron motif; it reads YVVTPLLLRGLTGSARRL. Topologically, residues 26–36 are mitochondrial matrix; the sequence is VHSMPPEQKLG. Residues 37 to 60 form a helical membrane-spanning segment; sequence VLELAIGFTSCMVTFLLPAGWIMS. The Mitochondrial intermembrane portion of the chain corresponds to 61-69; it reads HLESYKKRG.

It belongs to the cytochrome c oxidase VIII family. In terms of assembly, component of the cytochrome c oxidase (complex IV, CIV), a multisubunit enzyme composed of 14 subunits. The complex is composed of a catalytic core of 3 subunits MT-CO1, MT-CO2 and MT-CO3, encoded in the mitochondrial DNA, and 11 supernumerary subunits COX4I, COX5A, COX5B, COX6A, COX6B, COX6C, COX7A, COX7B, COX7C, COX8 and NDUFA4, which are encoded in the nuclear genome. The complex exists as a monomer or a dimer and forms supercomplexes (SCs) in the inner mitochondrial membrane with NADH-ubiquinone oxidoreductase (complex I, CI) and ubiquinol-cytochrome c oxidoreductase (cytochrome b-c1 complex, complex III, CIII), resulting in different assemblies (supercomplex SCI(1)III(2)IV(1) and megacomplex MCI(2)III(2)IV(2)). In response to mitochondrial stress, the precursor protein is ubiquitinated by the SIFI complex in the cytoplasm before mitochondrial import, leading to its degradation. Within the SIFI complex, UBR4 initiates ubiquitin chain that are further elongated or branched by KCMF1.

The protein resides in the mitochondrion inner membrane. The protein operates within energy metabolism; oxidative phosphorylation. Its function is as follows. Component of the cytochrome c oxidase, the last enzyme in the mitochondrial electron transport chain which drives oxidative phosphorylation. The respiratory chain contains 3 multisubunit complexes succinate dehydrogenase (complex II, CII), ubiquinol-cytochrome c oxidoreductase (cytochrome b-c1 complex, complex III, CIII) and cytochrome c oxidase (complex IV, CIV), that cooperate to transfer electrons derived from NADH and succinate to molecular oxygen, creating an electrochemical gradient over the inner membrane that drives transmembrane transport and the ATP synthase. Cytochrome c oxidase is the component of the respiratory chain that catalyzes the reduction of oxygen to water. Electrons originating from reduced cytochrome c in the intermembrane space (IMS) are transferred via the dinuclear copper A center (CU(A)) of subunit 2 and heme A of subunit 1 to the active site in subunit 1, a binuclear center (BNC) formed by heme A3 and copper B (CU(B)). The BNC reduces molecular oxygen to 2 water molecules using 4 electrons from cytochrome c in the IMS and 4 protons from the mitochondrial matrix. This is Cytochrome c oxidase subunit 8A, mitochondrial (COX8A) from Ateles belzebuth (White-bellied spider monkey).